The primary structure comprises 326 residues: N-acetyl-gamma-glutamyl-phosphate reductase (326 aa).

The active site involves Cys-155.

The protein belongs to the NAGSA dehydrogenase family. Type 1 subfamily.

The protein localises to the cytoplasm. The catalysed reaction is N-acetyl-L-glutamate 5-semialdehyde + phosphate + NADP(+) = N-acetyl-L-glutamyl 5-phosphate + NADPH + H(+). The protein operates within amino-acid biosynthesis; L-arginine biosynthesis; N(2)-acetyl-L-ornithine from L-glutamate: step 3/4. Catalyzes the NADPH-dependent reduction of N-acetyl-5-glutamyl phosphate to yield N-acetyl-L-glutamate 5-semialdehyde. The chain is N-acetyl-gamma-glutamyl-phosphate reductase from Shewanella baltica (strain OS155 / ATCC BAA-1091).